The primary structure comprises 610 residues: UvrABC system protein C (610 aa).

Residues 16-94 form the GIY-YIG domain; sequence SQPGVYRMYD…IKLYQPRYNV (79 aa). Residues 204-239 form the UVR domain; the sequence is DQVLTQLISRMETASQNLEFEEAARIRDQIQAVRRV.

Belongs to the UvrC family. Interacts with UvrB in an incision complex.

The protein localises to the cytoplasm. Functionally, the UvrABC repair system catalyzes the recognition and processing of DNA lesions. UvrC both incises the 5' and 3' sides of the lesion. The N-terminal half is responsible for the 3' incision and the C-terminal half is responsible for the 5' incision. The protein is UvrABC system protein C of Escherichia coli O45:K1 (strain S88 / ExPEC).